The following is a 409-amino-acid chain: MEARPVHRSGSRDLTRTSSIPSTQKPSPVEDSFMRSDNNSQLMSRPLGQTYHLLSSSNGGAVGHICSSSSSGFATNLHYSTMVSHEKQQHYTGSSSNNAVQTPSNNDSAWCHDSLPGGFLDFHETNPAIQNNCQIEDGGIAAAFDDIQKRSDWHEWADHLITDDDPLMSTNWNDLLLETNSNSDSKDQKTLQIPQPQIVQQQPSPSVELRPVSTTSSNSNNGTGKARMRWTPELHEAFVEAVNSLGGSERATPKGVLKIMKVEGLTIYHVKSHLQKYRTARYRPEPSETGSPERKLTPLEHITSLDLKGGIGITEALRLQMEVQKQLHEQLEIQRNLQLRIEEQGKYLQMMFEKQNSGLTKGTASTSDSAAKSEQEDKKTADSKEVPEEETRKCEELESPQPKRPKIDN.

Residues 1–15 (MEARPVHRSGSRDLT) show a composition bias toward basic and acidic residues. Disordered regions lie at residues 1 to 42 (MEAR…NSQL), 86 to 108 (EKQQHYTGSSSNNAVQTPSNNDS), and 178 to 226 (ETNS…TGKA). 2 stretches are compositionally biased toward polar residues: residues 16 to 26 (RTSSIPSTQKP) and 90 to 108 (HYTGSSSNNAVQTPSNNDS). A compositionally biased stretch (low complexity) spans 192–224 (QIPQPQIVQQQPSPSVELRPVSTTSSNSNNGTG). In terms of domain architecture, HTH myb-type spans 222–282 (GTGKARMRWT…HLQKYRTARY (61 aa)). Residues 253–278 (PKGVLKIMKVEGLTIYHVKSHLQKYR) constitute a DNA-binding region (H-T-H motif). Residues 314–334 (TEALRLQMEVQKQLHEQLEIQ) are a coiled coil. An LHEQLE motif is present at residues 327-332 (LHEQLE). Polar residues predominate over residues 358 to 370 (GLTKGTASTSDSA). Residues 358-409 (GLTKGTASTSDSAAKSEQEDKKTADSKEVPEEETRKCEELESPQPKRPKIDN) are disordered. Positions 371–396 (AKSEQEDKKTADSKEVPEEETRKCEE) are enriched in basic and acidic residues. Serine 399 carries the phosphoserine modification.

It belongs to the MYB-CC family. As to quaternary structure, homodimers and heterodimers. Interacts with SPX1 in a Pi-dependent manner. Does not interact with PHL2 or PHL3. Post-translationally, sumoylated by SIZ1. Sumoylation controls phosphate deficiency responses.

The protein localises to the nucleus. In terms of biological role, transcription factor involved in phosphate starvation signaling. Binds as a dimer to P1BS, an imperfect palindromic sequence 5'-GNATATNC-3', to promote the expression of inorganic phosphate (Pi) starvation-responsive genes. SPX1 is a competitive inhibitor of this DNA-binding. PHR1 binding to its targets is low Pi-dependent. Regulates the expression of miR399. Regulates the expression of IPS1 (At3g09922), a non-coding RNA that mimics the target of miR399 to block the cleavage of PHO2 under Pi-deficient conditions. Regulates lipid remodeling and triacylglycerol accumulation during phosphorus starvation. Required for the shoot-specific hypoxic response. Regulates FER1 expression upon phosphate starvation, linking iron and phosphate homeostasis. Contributes to the homeostasis of both sulfate and phosphate in plants under phosphate deficiency. Required for adaptation to high light and retaining functional photosynthesis during phosphate starvation. Involved in the coregulation of Zn and Pi homeostasis. This Arabidopsis thaliana (Mouse-ear cress) protein is Protein PHOSPHATE STARVATION RESPONSE 1.